A 392-amino-acid chain; its full sequence is Phosphopentomutase (392 aa).

6 residues coordinate Mn(2+): Asp-13, Asp-286, His-291, Asp-327, His-328, and His-339.

This sequence belongs to the phosphopentomutase family. It depends on Mn(2+) as a cofactor.

Its subcellular location is the cytoplasm. It carries out the reaction 2-deoxy-alpha-D-ribose 1-phosphate = 2-deoxy-D-ribose 5-phosphate. The enzyme catalyses alpha-D-ribose 1-phosphate = D-ribose 5-phosphate. It participates in carbohydrate degradation; 2-deoxy-D-ribose 1-phosphate degradation; D-glyceraldehyde 3-phosphate and acetaldehyde from 2-deoxy-alpha-D-ribose 1-phosphate: step 1/2. In terms of biological role, isomerase that catalyzes the conversion of deoxy-ribose 1-phosphate (dRib-1-P) and ribose 1-phosphate (Rib-1-P) to deoxy-ribose 5-phosphate (dRib-5-P) and ribose 5-phosphate (Rib-5-P), respectively. This is Phosphopentomutase from Oceanobacillus iheyensis (strain DSM 14371 / CIP 107618 / JCM 11309 / KCTC 3954 / HTE831).